The sequence spans 237 residues: NAD-dependent protein deacylase (237 aa).

Residues Met-1–Leu-235 form the Deacetylase sirtuin-type domain. Gly-8–Trp-28 is a binding site for NAD(+). Substrate is bound by residues Tyr-53 and Arg-56. Gln-86–Asp-89 provides a ligand contact to NAD(+). The Proton acceptor role is filled by His-104. Residues Cys-112, Cys-115, Cys-138, and Cys-140 each coordinate Zn(2+). NAD(+)-binding positions include Gly-177–Ser-179, Asn-203–Glu-205, and Ala-221.

The protein belongs to the sirtuin family. Class III subfamily. It depends on Zn(2+) as a cofactor.

The protein localises to the cytoplasm. The catalysed reaction is N(6)-acetyl-L-lysyl-[protein] + NAD(+) + H2O = 2''-O-acetyl-ADP-D-ribose + nicotinamide + L-lysyl-[protein]. It catalyses the reaction N(6)-succinyl-L-lysyl-[protein] + NAD(+) + H2O = 2''-O-succinyl-ADP-D-ribose + nicotinamide + L-lysyl-[protein]. Functionally, NAD-dependent lysine deacetylase and desuccinylase that specifically removes acetyl and succinyl groups on target proteins. Modulates the activities of several proteins which are inactive in their acylated form. The polypeptide is NAD-dependent protein deacylase (Mycobacterium bovis (strain ATCC BAA-935 / AF2122/97)).